Here is a 142-residue protein sequence, read N- to C-terminus: Large ribosomal subunit protein uL13 (142 aa).

Belongs to the universal ribosomal protein uL13 family. In terms of assembly, part of the 50S ribosomal subunit.

Functionally, this protein is one of the early assembly proteins of the 50S ribosomal subunit, although it is not seen to bind rRNA by itself. It is important during the early stages of 50S assembly. This Klebsiella pneumoniae (strain 342) protein is Large ribosomal subunit protein uL13.